The primary structure comprises 606 residues: Probable glutamine--fructose-6-phosphate aminotransferase [isomerizing] (606 aa).

The active-site For GATase activity is the cysteine 2. Residues 2 to 224 enclose the Glutamine amidotransferase type-2 domain; the sequence is CGISACLNHT…DNDYGYITNN (223 aa). SIS domains lie at 282 to 427 and 458 to 596; these read FFPE…SLDN and LLEF…PDYP.

The enzyme catalyses D-fructose 6-phosphate + L-glutamine = D-glucosamine 6-phosphate + L-glutamate. The protein operates within nucleotide-sugar biosynthesis; UDP-N-acetyl-alpha-D-glucosamine biosynthesis; alpha-D-glucosamine 6-phosphate from D-fructose 6-phosphate: step 1/1. Functionally, controls the flux of glucose into the hexosamine pathway. Most likely involved in regulating the availability of precursors for glycosylation of proteins (Potential). The sequence is that of Probable glutamine--fructose-6-phosphate aminotransferase [isomerizing] from Acanthamoeba polyphaga (Amoeba).